Reading from the N-terminus, the 177-residue chain is Inorganic pyrophosphatase (177 aa).

Residues K31, R45, and Y57 each contribute to the substrate site. Mg(2+) is bound by residues D67, D72, and D104. Position 142 (Y142) interacts with substrate.

This sequence belongs to the PPase family. Homohexamer. Mg(2+) is required as a cofactor.

Its subcellular location is the cytoplasm. The catalysed reaction is diphosphate + H2O = 2 phosphate + H(+). In terms of biological role, catalyzes the hydrolysis of inorganic pyrophosphate (PPi) forming two phosphate ions. The sequence is that of Inorganic pyrophosphatase from Neisseria meningitidis serogroup A / serotype 4A (strain DSM 15465 / Z2491).